A 2690-amino-acid polypeptide reads, in one-letter code: Probable polyketide synthase 28 (2690 aa).

Positions Tyr15–Glu443 constitute a Ketosynthase family 3 (KS3) domain. Residues Cys187, His326, and His366 each act as for beta-ketoacyl synthase activity in the active site. Positions Gly651–Tyr684 are acyl/malonyl transferases. The active-site For acyl/malonyl transferase activity is the Ser661. Residues Asn906–Asn934 are a coiled coil. Residues Asn916–Asn946 are disordered. Positions His973 to Ser1102 are N-terminal hotdog fold. The region spanning His973 to Ser1285 is the PKS/mFAS DH domain. Residue His1014 is the Proton acceptor; for dehydratase activity of the active site. Positions Asn1119–Ser1285 are C-terminal hotdog fold. The active-site Proton donor; for dehydratase activity is the Asp1188. Residues Leu1401–Glu1429 form a disordered region. Positions Lys1412–Glu1429 are enriched in low complexity. One can recognise a Carrier domain in the interval Ser2594–Tyr2671. Ser2631 carries the O-(pantetheine 4'-phosphoryl)serine modification.

The cofactor is pantetheine 4'-phosphate.

Probable polyketide synthase. This Dictyostelium discoideum (Social amoeba) protein is Probable polyketide synthase 28 (pks28).